The following is a 390-amino-acid chain: Galactokinase (390 aa).

34–37 (EHTD) provides a ligand contact to substrate. Residues S68 and 122–128 (GSGLSSS) each bind ATP. Residues S128 and E160 each coordinate Mg(2+). The active-site Proton acceptor is D172. Y221 contributes to the substrate binding site.

It belongs to the GHMP kinase family. GalK subfamily.

It is found in the cytoplasm. It carries out the reaction alpha-D-galactose + ATP = alpha-D-galactose 1-phosphate + ADP + H(+). It participates in carbohydrate metabolism; galactose metabolism. Its function is as follows. Catalyzes the transfer of the gamma-phosphate of ATP to D-galactose to form alpha-D-galactose-1-phosphate (Gal-1-P). In Chloroflexus aggregans (strain MD-66 / DSM 9485), this protein is Galactokinase.